Consider the following 185-residue polypeptide: ATP-dependent protease subunit HslV (185 aa).

Residue Thr12 is part of the active site. Residues Ala168, Cys171, and Thr174 each coordinate Na(+).

The protein belongs to the peptidase T1B family. HslV subfamily. In terms of assembly, a double ring-shaped homohexamer of HslV is capped on each side by a ring-shaped HslU homohexamer. The assembly of the HslU/HslV complex is dependent on binding of ATP.

It is found in the cytoplasm. It catalyses the reaction ATP-dependent cleavage of peptide bonds with broad specificity.. Its activity is regulated as follows. Allosterically activated by HslU binding. Protease subunit of a proteasome-like degradation complex believed to be a general protein degrading machinery. The chain is ATP-dependent protease subunit HslV from Dinoroseobacter shibae (strain DSM 16493 / NCIMB 14021 / DFL 12).